The following is an 802-amino-acid chain: Receptor-type tyrosine-protein phosphatase alpha (802 aa).

The first 19 residues, 1 to 19, serve as a signal peptide directing secretion; sequence MDSWFILVLLGSGLICVSA. Over 20-151 the chain is Extracellular; it reads NNATTVAPSV…DSKDRRDETP (132 aa). Residues asparagine 21 and asparagine 36 are each glycosylated (N-linked (GlcNAc...) asparagine). The disordered stretch occupies residues 39 to 59; sequence TAEPVKEEAKTSNPTSSLTSL. 5 N-linked (GlcNAc...) asparagine glycosylation sites follow: asparagine 68, asparagine 80, asparagine 86, asparagine 104, and asparagine 124. Polar residues-rich tracts occupy residues 79 to 115 and 123 to 141; these read VNSSDSDNGTTRTASTNSIGITISPNGTWLPDNQFTD and GNSSTAATTPETFPPSGNS. A disordered region spans residues 79-146; sequence VNSSDSDNGT…PSGNSDSKDR (68 aa). Residues 152–174 form a helical membrane-spanning segment; that stretch reads IIAVMVALSSLLVIVFIIIVLYM. The Cytoplasmic segment spans residues 175–802; sequence LRFKKYKQAG…DAFSDYANFK (628 aa). Serine 211 and serine 213 each carry phosphoserine. Tyrosine-protein phosphatase domains lie at 241 to 501 and 533 to 791; these read FREE…LLEH and LEEE…VQEY. Residues aspartate 410, 442-448, and glutamine 486 each bind substrate; that span reads CSAGVGR. The active-site Phosphocysteine intermediate is cysteine 442. Cysteine 732 (phosphocysteine intermediate) is an active-site residue. Phosphotyrosine is present on tyrosine 798.

The protein belongs to the protein-tyrosine phosphatase family. Receptor class 4 subfamily. In terms of assembly, part of a complex comprised of PTPRA, BCAR1, BCAR3 (via SH2 domain), and SRC. Within the complex, interacts (when phosphorylated on Tyr-798) with BCAR3 (via SH2 domain). Interacts with GRB2. Post-translationally, integrin binding to extracellular matrix induces phosphorylation at Tyr-798 which induces PTPRA localization and recruitment of BCAR3, BCAR1 and CRK to focal adhesions.

The protein resides in the cell membrane. The protein localises to the cell junction. It localises to the focal adhesion. It carries out the reaction O-phospho-L-tyrosyl-[protein] + H2O = L-tyrosyl-[protein] + phosphate. Functionally, tyrosine protein phosphatase which is involved in integrin-mediated focal adhesion formation. Following integrin engagement, specifically recruits BCAR3, BCAR1 and CRK to focal adhesions thereby promoting SRC-mediated phosphorylation of BRAC1 and the subsequent activation of PAK and small GTPase RAC1 and CDC42. This is Receptor-type tyrosine-protein phosphatase alpha (PTPRA) from Homo sapiens (Human).